We begin with the raw amino-acid sequence, 225 residues long: Orotidine 5'-phosphate decarboxylase (225 aa).

Substrate is bound by residues D9, K31, 58 to 67, T115, R176, Q184, G204, and R205; that span reads DLKLHDIPNT. K60 acts as the Proton donor in catalysis.

Belongs to the OMP decarboxylase family. Type 1 subfamily. In terms of assembly, homodimer.

The enzyme catalyses orotidine 5'-phosphate + H(+) = UMP + CO2. Its pathway is pyrimidine metabolism; UMP biosynthesis via de novo pathway; UMP from orotate: step 2/2. Functionally, catalyzes the decarboxylation of orotidine 5'-monophosphate (OMP) to uridine 5'-monophosphate (UMP). The sequence is that of Orotidine 5'-phosphate decarboxylase from Wolbachia sp. subsp. Brugia malayi (strain TRS).